The following is a 442-amino-acid chain: Endothelin receptor type B (442 aa).

The first 26 residues, 1–26 (MQPPPSLCGRALVALVLACGLSRIWG), serve as a signal peptide directing secretion. Residues 27–101 (EERGFPPDRA…GSIEIKETFK (75 aa)) are Extracellular-facing. A glycan (N-linked (GlcNAc...) asparagine) is linked at Asn59. Positions 69–88 (AEVPKGDRTAGSPPRTISPP) are disordered. Residues 102-126 (YINTVVSCLVFVLGIIGNSTLLRII) traverse the membrane as a helical segment. Residues 127-137 (YKNKCMRNGPN) lie on the Cytoplasmic side of the membrane. Residues 138-163 (ILIASLALGDLLHIIIDIPITVYKLL) form a helical membrane-spanning segment. Residues 164–175 (AEDWPFGVEMCK) are Extracellular-facing. The cysteines at positions 174 and 255 are disulfide-linked. A helical transmembrane segment spans residues 176 to 197 (LVPFIQKASVGITVLSLCALSI). The Cytoplasmic segment spans residues 198-218 (DRYRAVASWSRIKGIGVPKWT). A helical transmembrane segment spans residues 219-243 (AVEIVLIWVVSVVLAVPEAVGFDMI). Residues 244 to 271 (TIDYKGRYLRICLLHPTQKTAFMQFYKT) lie on the Extracellular side of the membrane. Residues 272 to 296 (AKDWWLFSFYFCLPLAITAFFYTLM) traverse the membrane as a helical segment. The Cytoplasmic segment spans residues 297–324 (TCEMLRKKSGMQIALNDHLKQRREVAKT). Phosphoserine is present on Ser305. A helical membrane pass occupies residues 325-350 (VFCLVLVFALCWLPLHLSRILKLTIY). The Extracellular segment spans residues 351 to 362 (DQNDPNRCELLS). A helical transmembrane segment spans residues 363–389 (FLLVLDYIGINMASLNSCINPIALYLV). Topologically, residues 390–442 (SKRFKNCFKSCLCCWCQSFEEKQSLEEKQSCLKFKANDHGYDNFRSSNKYSSS) are cytoplasmic. S-palmitoyl cysteine attachment occurs at residues Cys402, Cys403, and Cys405. A Phosphoserine modification is found at Ser419. Position 439 is a phosphotyrosine (Tyr439). 3 positions are modified to phosphoserine: Ser440, Ser441, and Ser442.

Belongs to the G-protein coupled receptor 1 family. Endothelin receptor subfamily. EDNRB sub-subfamily.

It localises to the cell membrane. Non-specific receptor for endothelin 1, 2, and 3. Mediates its action by association with G proteins that activate a phosphatidylinositol-calcium second messenger system. The chain is Endothelin receptor type B (EDNRB) from Canis lupus familiaris (Dog).